We begin with the raw amino-acid sequence, 328 residues long: Interleukin-12 subunit beta (328 aa).

The first 22 residues, 1-22 (MCHQQLVISWFSLVFLASPLMA), serve as a signal peptide directing secretion. Positions 29 to 106 (DVYVVELDWY…LSHSLLLLHK (78 aa)) constitute an Ig-like C2-type domain. C50 and C90 are joined by a disulfide. 3 N-linked (GlcNAc...) asparagine glycosylation sites follow: N125, N135, and N222. The Fibronectin type-III domain occupies 237–328 (PPKNLQLKPL…WSEWASVPCS (92 aa)).

Belongs to the IL-12B family. As to quaternary structure, heterodimer with IL12A; disulfide-linked. The heterodimer is known as interleukin IL-12. Heterodimer with IL23A; disulfide-linked. The heterodimer is known as interleukin IL-23. Also secreted as a monomer. Interacts with NBR1; this interaction promotes IL-12 secretion.

Its subcellular location is the secreted. Its function is as follows. Cytokine that can act as a growth factor for activated T and NK cells, enhance the lytic activity of NK/lymphokine-activated killer cells, and stimulate the production of IFN-gamma by resting PBMC. Functionally, associates with IL23A to form the IL-23 interleukin, a heterodimeric cytokine which functions in innate and adaptive immunity. IL-23 may constitute with IL-17 an acute response to infection in peripheral tissues. IL-23 binds to a heterodimeric receptor complex composed of IL12RB1 and IL23R, activates the Jak-Stat signaling cascade, stimulates memory rather than naive T-cells and promotes production of pro-inflammatory cytokines. IL-23 induces autoimmune inflammation and thus may be responsible for autoimmune inflammatory diseases and may be important for tumorigenesis. The chain is Interleukin-12 subunit beta (IL12B) from Macaca mulatta (Rhesus macaque).